The chain runs to 459 residues: ATP synthase subunit beta (459 aa).

Residue 148–155 (GGAGVGKT) coordinates ATP.

This sequence belongs to the ATPase alpha/beta chains family. As to quaternary structure, F-type ATPases have 2 components, CF(1) - the catalytic core - and CF(0) - the membrane proton channel. CF(1) has five subunits: alpha(3), beta(3), gamma(1), delta(1), epsilon(1). CF(0) has three main subunits: a(1), b(2) and c(9-12). The alpha and beta chains form an alternating ring which encloses part of the gamma chain. CF(1) is attached to CF(0) by a central stalk formed by the gamma and epsilon chains, while a peripheral stalk is formed by the delta and b chains.

The protein resides in the cell inner membrane. The catalysed reaction is ATP + H2O + 4 H(+)(in) = ADP + phosphate + 5 H(+)(out). Its function is as follows. Produces ATP from ADP in the presence of a proton gradient across the membrane. The catalytic sites are hosted primarily by the beta subunits. The protein is ATP synthase subunit beta of Cellvibrio japonicus (strain Ueda107) (Pseudomonas fluorescens subsp. cellulosa).